A 207-amino-acid chain; its full sequence is UPF0328 protein ECU02_1590/ECU04_0060/ECU08_2120 (207 aa).

2 disordered regions span residues 1 to 154 and 180 to 207; these read MPRP…HSHT and GRLH…LATL. 2 stretches are compositionally biased toward basic and acidic residues: residues 14–24 and 75–97; these read DHPDFRSESSA and HTEG…ETES. 2 stretches are compositionally biased toward polar residues: residues 98 to 121 and 133 to 149; these read PKPQ…SQNT and SRPS…QSPH.

This sequence belongs to the UPF0328 family.

In Encephalitozoon cuniculi (strain GB-M1) (Microsporidian parasite), this protein is UPF0328 protein ECU02_1590/ECU04_0060/ECU08_2120.